The primary structure comprises 460 residues: Cysteine--tRNA ligase (460 aa).

Cys-28 lines the Zn(2+) pocket. The 'HIGH' region signature appears at 30 to 40 (MTVYDYCHLGH). Residues Cys-209, His-234, and Glu-238 each coordinate Zn(2+). Positions 266-270 (KMSKS) match the 'KMSKS' region motif. An ATP-binding site is contributed by Lys-269.

It belongs to the class-I aminoacyl-tRNA synthetase family. Monomer. It depends on Zn(2+) as a cofactor.

It is found in the cytoplasm. It carries out the reaction tRNA(Cys) + L-cysteine + ATP = L-cysteinyl-tRNA(Cys) + AMP + diphosphate. This chain is Cysteine--tRNA ligase, found in Pseudomonas syringae pv. syringae (strain B728a).